The chain runs to 237 residues: Lectin (237 aa).

Mn(2+) contacts are provided by Glu8 and Asp10. Ca(2+) is bound by residues Asp10, Tyr12, Asn14, and Asp19. A carbohydrate contacts are provided by Tyr12 and Asn14. Residues Asp19 and His24 each coordinate Mn(2+). 98 to 100 (GLY) contacts a carbohydrate. Asp208 lines the Ca(2+) pocket. The a carbohydrate site is built by Gly227 and Arg228.

This sequence belongs to the leguminous lectin family. In terms of assembly, homotetramer; dimer of dimers. In terms of processing, concanavalin A-like lectins of the Diocleinae subtribe undergo proteolytic processing referred to as circular permutation. The propeptide is split into an N-terminal and a C-terminal part, the gamma and beta chain, respectively. These are then religated in beta-gamma order to form the mature alpha chain. The beta and gamma chains can often be detected in cell extracts. Residues 1-118 of the mature chain, as displayed here, probably constitute the beta chain in the propeptide, residues 119-237 the gamma chain.

In terms of biological role, D-mannose/D-glucose-binding lectin with hemagglutinating activity towards rabbit and human erythrocytes. In rats, induces dose-dependent paw edema. Has low cytotoxicity against Artemisia sp. This Macropsychanthus comosus (Sea purse) protein is Lectin.